A 243-amino-acid chain; its full sequence is 2-C-methyl-D-erythritol 4-phosphate cytidylyltransferase (243 aa).

This sequence belongs to the IspD/TarI cytidylyltransferase family. IspD subfamily.

The enzyme catalyses 2-C-methyl-D-erythritol 4-phosphate + CTP + H(+) = 4-CDP-2-C-methyl-D-erythritol + diphosphate. It functions in the pathway isoprenoid biosynthesis; isopentenyl diphosphate biosynthesis via DXP pathway; isopentenyl diphosphate from 1-deoxy-D-xylulose 5-phosphate: step 2/6. Catalyzes the formation of 4-diphosphocytidyl-2-C-methyl-D-erythritol from CTP and 2-C-methyl-D-erythritol 4-phosphate (MEP). The protein is 2-C-methyl-D-erythritol 4-phosphate cytidylyltransferase of Chlorobium phaeovibrioides (strain DSM 265 / 1930) (Prosthecochloris vibrioformis (strain DSM 265)).